The chain runs to 203 residues: Ras-related protein Rab-30 (203 aa).

GTP contacts are provided by V20, G21, K22, T23, C24, and T41. T23 provides a ligand contact to Mg(2+). The interval 36-44 (PGQGATIGV) is switch-I. Positions 41 and 64 each coordinate Mg(2+). G67, N122, K123, D125, A153, and K154 together coordinate GTP. Residues 67–83 (GQERFRSITQSYYRSAN) form a switch-II region. S-geranylgeranyl cysteine attachment occurs at residues C199 and C200. C200 is subject to Cysteine methyl ester. Positions 201-203 (NFN) are cleaved as a propeptide — removed in mature form.

It belongs to the small GTPase superfamily. Rab family. The cofactor is Mg(2+).

Its subcellular location is the membrane. The protein resides in the golgi apparatus. It is found in the trans-Golgi network membrane. The protein localises to the cis-Golgi network membrane. It localises to the golgi apparatus membrane. Its subcellular location is the cytoplasm. The protein resides in the cytoplasmic vesicle. It is found in the autophagosome membrane. The protein localises to the autolysosome membrane. The catalysed reaction is GTP + H2O = GDP + phosphate + H(+). With respect to regulation, regulated by guanine nucleotide exchange factors (GEFs) which promote the exchange of bound GDP for free GTP. Regulated by GTPase activating proteins (GAPs) which increase the GTP hydrolysis activity. Inhibited by GDP dissociation inhibitors (GDIs). Its function is as follows. The small GTPases Rab are key regulators of intracellular membrane trafficking, from the formation of transport vesicles to their fusion with membranes. Rabs cycle between an inactive GDP-bound form and an active GTP-bound form that is able to recruit to membranes different sets of downstream effectors directly responsible for vesicle formation, movement, tethering and fusion. RAB30 is required for maintaining the structural integrity of the Golgi apparatus, possibly by mediating interactions with cytoplasmic scaffolding proteins. Facilitates lipid homeostasis during fasting by regulating hepatic protein and lipid trafficking in a PPAR-alpha-dependent manner. Promotes autophagosome biogenesis during bacterial infection such as group A Streptococcus infection. This is Ras-related protein Rab-30 (RAB30) from Bos taurus (Bovine).